Reading from the N-terminus, the 536-residue chain is MSSFQIYRAALLLSILATANAQQVGTYTTETHPSLTWQTCTSDGSCTTNDGEVVIDANWRWVHSTSSATNCYTGNEWDTSICTDDVTCAANCALDGATYEATYGVTTSGSELRLNFVTQGSSKNIGSRLYLMSDDSNYELFKLLGQEFTFDVDVSNLPCGLNGALYFVAMDADGGTSEYSGNKAGAKYGTGYCDSQCPRDLKFINGEANCDGWEPSSNNVNTGVGDHGSCCAEMDVWEANSISNAFTAHPCDSVSQTMCDGDSCGGTYSASGDRYSGTCDPDGCDYNPYRLGNTDFYGPGLTVDTNSPFTVVTQFITDDGTSSGTLTEIKRLYVQNGEVIANGASTYSSVNGSSITSAFCESEKTLFGDENVFDKHGGLEGMGEAMAKGMVLVLSLWDDYAADMLWLDSDYPVNSSASTPGVARGTCSTDSGVPATVEAESPNAYVTYSNIKFGPIGSTYSSGSSSGSGSSSSSSSTTTKATSTTLKTTSTTSSGSSSTSAAQAYGQCGGQGWTGPTTCVSGYTCTYENAYYSQCL.

An N-terminal signal peptide occupies residues Met1–Ala21. The segment at Gln22–Ser458 is catalytic. Glu233 acts as the Nucleophile in catalysis. Glu238 acts as the Proton donor in catalysis. N-linked (GlcNAc...) asparagine glycans are attached at residues Asn351 and Asn414. Positions Thr459 to Ser500 are ser/Thr-rich linker. Residues Ser464–Thr499 form a disordered region. The CBM1 domain maps to Ser500–Leu536. 2 disulfides stabilise this stretch: Cys508–Cys525 and Cys519–Cys535.

This sequence belongs to the glycosyl hydrolase 7 (cellulase C) family.

It is found in the secreted. It carries out the reaction Hydrolysis of (1-&gt;4)-beta-D-glucosidic linkages in cellulose and cellotetraose, releasing cellobiose from the non-reducing ends of the chains.. Functionally, the biological conversion of cellulose to glucose generally requires three types of hydrolytic enzymes: (1) Endoglucanases which cut internal beta-1,4-glucosidic bonds; (2) Exocellobiohydrolases that cut the disaccharide cellobiose from the non-reducing end of the cellulose polymer chain; (3) Beta-1,4-glucosidases which hydrolyze the cellobiose and other short cello-oligosaccharides to glucose. This Aspergillus niger protein is 1,4-beta-D-glucan cellobiohydrolase B (cbhB).